Reading from the N-terminus, the 506-residue chain is Maturase K (506 aa).

The protein belongs to the intron maturase 2 family. MatK subfamily.

It is found in the plastid. It localises to the chloroplast. Its function is as follows. Usually encoded in the trnK tRNA gene intron. Probably assists in splicing its own and other chloroplast group II introns. The protein is Maturase K of Crataegus monogyna (Hawthorn).